We begin with the raw amino-acid sequence, 1842 residues long: Fatty acid synthase subunit alpha (1842 aa).

A disordered region spans residues 101 to 141 (PAEAPASTSSTPKVETAAAAAPAATPAPAPAQTSAPAAALP). The span at 116-139 (TAAAAAPAATPAPAPAQTSAPAAA) shows a compositional bias: low complexity. Residues 145-220 (PKALEVLHTL…AIMQSSFNGS (76 aa)) form the Carrier domain. O-(pantetheine 4'-phosphoryl)serine is present on serine 180. A Phosphoserine modification is found at serine 604. Positions 1079–1616 (LQEVVIDHDL…QVGGQVIVIH (538 aa)) constitute a Ketosynthase family 3 (KS3) domain. Cysteine 1262 acts as the For beta-ketoacyl synthase activity in catalysis. Residues 1304-1332 (GATSNAAKETERGRTPQEMSRPATSTRDG) are disordered. Serine 1412 carries the phosphoserine modification. Catalysis depends on for beta-ketoacyl synthase activity residues histidine 1501 and histidine 1542. Mg(2+)-binding residues include aspartate 1728, valine 1729, and glutamate 1730. Acetyl-CoA contacts are provided by residues 1728–1730 (DVE), tyrosine 1754, serine 1764, 1773–1783 (EAVFKSLGISG), 1797–1800 (SSES), and 1827–1829 (ISH). Mg(2+) is bound by residues serine 1828 and histidine 1829.

This sequence belongs to the thiolase-like superfamily. Fungal fatty acid synthetase subunit alpha family. [Alpha(6)beta(6)] hexamers of two multifunctional subunits (alpha and beta).

It catalyses the reaction acetyl-CoA + n malonyl-CoA + 2n NADPH + 4n H(+) = a long-chain-acyl-CoA + n CoA + n CO2 + 2n NADP(+).. It carries out the reaction a fatty acyl-[ACP] + malonyl-[ACP] + H(+) = a 3-oxoacyl-[ACP] + holo-[ACP] + CO2. The catalysed reaction is a (3R)-hydroxyacyl-[ACP] + NADP(+) = a 3-oxoacyl-[ACP] + NADPH + H(+). Its function is as follows. Fatty acid synthetase catalyzes the formation of long-chain fatty acids from acetyl-CoA, malonyl-CoA and NADPH. The alpha subunit contains domains for: acyl carrier protein, 3-oxoacyl-[acyl-carrier-protein] reductase, and 3-oxoacyl-[acyl-carrier-protein] synthase. This subunit coordinates the binding of the six beta subunits to the enzyme complex. This is Fatty acid synthase subunit alpha (fas2) from Schizosaccharomyces pombe (strain 972 / ATCC 24843) (Fission yeast).